Here is a 192-residue protein sequence, read N- to C-terminus: NADH-quinone oxidoreductase subunit B 1 (192 aa).

The [4Fe-4S] cluster site is built by Cys71, Cys72, Cys136, and Cys166.

It belongs to the complex I 20 kDa subunit family. As to quaternary structure, NDH-1 is composed of 14 different subunits. Subunits NuoB, C, D, E, F, and G constitute the peripheral sector of the complex. [4Fe-4S] cluster serves as cofactor.

Its subcellular location is the cell inner membrane. The catalysed reaction is a quinone + NADH + 5 H(+)(in) = a quinol + NAD(+) + 4 H(+)(out). In terms of biological role, NDH-1 shuttles electrons from NADH, via FMN and iron-sulfur (Fe-S) centers, to quinones in the respiratory chain. The immediate electron acceptor for the enzyme in this species is believed to be ubiquinone. Couples the redox reaction to proton translocation (for every two electrons transferred, four hydrogen ions are translocated across the cytoplasmic membrane), and thus conserves the redox energy in a proton gradient. This is NADH-quinone oxidoreductase subunit B 1 from Rhizobium meliloti (strain 1021) (Ensifer meliloti).